The primary structure comprises 338 residues: UDP-glucose 4-epimerase (338 aa).

Residues 11-12 (YI), 31-36 (DNLCNS), 58-59 (DI), 80-84 (FAGLK), asparagine 99, serine 124, tyrosine 149, lysine 153, and phenylalanine 178 contribute to the NAD(+) site. The substrate site is built by serine 124 and tyrosine 149. The Proton acceptor role is filled by tyrosine 149. Substrate-binding positions include asparagine 179, 199 to 200 (NL), 216 to 218 (SVF), arginine 231, and 292 to 295 (RPGD).

It belongs to the NAD(P)-dependent epimerase/dehydratase family. In terms of assembly, homodimer. NAD(+) is required as a cofactor.

It catalyses the reaction UDP-alpha-D-glucose = UDP-alpha-D-galactose. It functions in the pathway carbohydrate metabolism; galactose metabolism. Involved in the metabolism of galactose. Catalyzes the conversion of UDP-galactose (UDP-Gal) to UDP-glucose (UDP-Glc) through a mechanism involving the transient reduction of NAD. The chain is UDP-glucose 4-epimerase (galE) from Pasteurella multocida (strain Pm70).